The following is a 434-amino-acid chain: UDP-N-acetylglucosamine 1-carboxyvinyltransferase (434 aa).

22–23 (KN) serves as a coordination point for phosphoenolpyruvate. Residue Arg99 coordinates UDP-N-acetyl-alpha-D-glucosamine. Cys123 serves as the catalytic Proton donor. The residue at position 123 (Cys123) is a 2-(S-cysteinyl)pyruvic acid O-phosphothioketal. UDP-N-acetyl-alpha-D-glucosamine is bound by residues 128–132 (RPVDQ), Asp317, and Ile339.

It belongs to the EPSP synthase family. MurA subfamily.

Its subcellular location is the cytoplasm. The enzyme catalyses phosphoenolpyruvate + UDP-N-acetyl-alpha-D-glucosamine = UDP-N-acetyl-3-O-(1-carboxyvinyl)-alpha-D-glucosamine + phosphate. The protein operates within cell wall biogenesis; peptidoglycan biosynthesis. Functionally, cell wall formation. Adds enolpyruvyl to UDP-N-acetylglucosamine. The chain is UDP-N-acetylglucosamine 1-carboxyvinyltransferase from Paracidovorax citrulli (strain AAC00-1) (Acidovorax citrulli).